A 334-amino-acid polypeptide reads, in one-letter code: Meso-diaminopimelate D-dehydrogenase (334 aa).

NADP(+) is bound by residues 16–19 (YGNL), 40–42 (TRR), 75–78 (CSGS), 98–100 (GFD), and 127–131 (CGWDP). Substrate contacts are provided by residues Asp100, Asp130, Trp154, 160 to 161 (QG), Thr179, Arg205, His255, and Asn284.

Belongs to the diaminopimelate dehydrogenase family. In terms of assembly, homodimer.

It catalyses the reaction meso-2,6-diaminopimelate + NADP(+) + H2O = (S)-2-amino-6-oxoheptanedioate + NH4(+) + NADPH + H(+). The protein operates within amino-acid biosynthesis; L-lysine biosynthesis via DAP pathway; DL-2,6-diaminopimelate from (S)-tetrahydrodipicolinate: step 1/1. Catalyzes the reversible NADPH-dependent reductive amination of L-2-amino-6-oxopimelate, the acyclic form of L-tetrahydrodipicolinate, to generate the meso compound, D,L-2,6-diaminopimelate. Probably plays a role in lysine biosynthesis. Exhibits a high substrate specificity for meso-2,6-diaminopimelate (m-DAP), since the activity with L,L-2,6-diaminopimelate is less than 5% of the activity observed with m-DAP. Can use NAD(+) only very poorly since the activity observed in the presence of NAD(+) is about 0.3% of that with NADP(+). The sequence is that of Meso-diaminopimelate D-dehydrogenase (ddh) from Acetivibrio thermocellus (strain ATCC 27405 / DSM 1237 / JCM 9322 / NBRC 103400 / NCIMB 10682 / NRRL B-4536 / VPI 7372) (Clostridium thermocellum).